A 444-amino-acid polypeptide reads, in one-letter code: MLTRFAPSPTGYLHVGNIRTALICWMYTRNQNGKFLLRFDDTDLERSDIKYVDNIIEDLKWIGINWNSSFKQSERFERYNEVFLQLMKEGHIYACYETREELDTKRKLQLKQGFPPVYDKGALLLTEQEKIRYEQEGRKPHFRFKLDRNKTVKWNDEVKGEINIATIHISDPVVKREDGIYTYMLPSVIDDIDFNVTHVVRGEDHVTNTAVQIQMIQALKAKIPIFAHLPLLHFDDSKISKRKGGLDIKSIREDEIESMALTSYLAKLGTSDPIEAYIDMQSLIDSFDIKKFSSASLQFSLSEMYKLNSKVLQQMPFEMVQDRLSQIGSEFWYFIRSNIEKFSEVAKWWKICKFGIEPVVLNKEFIKIALSTLPQGDCNENTLSEWVKNIRQTIDIKAKDLFMQLRLALTGTETGPELAKLLIFIGRESIIARLEESQRIIQKV.

Positions 7 to 17 match the 'HIGH' region motif; the sequence is PSPTGYLHVGN. Residues 238-242 carry the 'KMSKS' region motif; sequence KISKR. Residue Lys241 coordinates ATP.

This sequence belongs to the class-I aminoacyl-tRNA synthetase family. Glutamate--tRNA ligase type 1 subfamily. As to quaternary structure, monomer.

The protein resides in the cytoplasm. The catalysed reaction is tRNA(Glu) + L-glutamate + ATP = L-glutamyl-tRNA(Glu) + AMP + diphosphate. In terms of biological role, catalyzes the attachment of glutamate to tRNA(Glu) in a two-step reaction: glutamate is first activated by ATP to form Glu-AMP and then transferred to the acceptor end of tRNA(Glu). The chain is Glutamate--tRNA ligase 1 from Wolbachia pipientis subsp. Culex pipiens (strain wPip).